Here is a 416-residue protein sequence, read N- to C-terminus: uncharacterized protein (416 aa).

This is an uncharacterized protein from Methanocaldococcus jannaschii (strain ATCC 43067 / DSM 2661 / JAL-1 / JCM 10045 / NBRC 100440) (Methanococcus jannaschii).